We begin with the raw amino-acid sequence, 442 residues long: UDP-N-acetylglucosamine 1-carboxyvinyltransferase (442 aa).

Lys22–Asn23 is a binding site for phosphoenolpyruvate. Arg94 is a binding site for UDP-N-acetyl-alpha-D-glucosamine. Asp119 acts as the Proton donor in catalysis. UDP-N-acetyl-alpha-D-glucosamine is bound by residues Asp309 and Val331.

It belongs to the EPSP synthase family. MurA subfamily.

It localises to the cytoplasm. The enzyme catalyses phosphoenolpyruvate + UDP-N-acetyl-alpha-D-glucosamine = UDP-N-acetyl-3-O-(1-carboxyvinyl)-alpha-D-glucosamine + phosphate. It functions in the pathway cell wall biogenesis; peptidoglycan biosynthesis. Functionally, cell wall formation. Adds enolpyruvyl to UDP-N-acetylglucosamine. The protein is UDP-N-acetylglucosamine 1-carboxyvinyltransferase of Chlamydia muridarum (strain MoPn / Nigg).